Here is a 154-residue protein sequence, read N- to C-terminus: uncharacterized protein (154 aa).

A signal peptide spans 1-19; that stretch reads MWSLKSTLCIALLVTYSVA. 2 consecutive ShKT domains span residues 67–102 and 113–150; these read CADDPNTDCTQYTSLCSNAKYTPLLQQFCPKTCGFC and CVDSSTNCANWEKNGFCSSTFYDCANKKQYCAKTCKLC. Disulfide bonds link C67/C102, C75/C95, C82/C99, C113/C150, C120/C143, and C129/C147.

This is an uncharacterized protein from Caenorhabditis elegans.